Reading from the N-terminus, the 249-residue chain is Exosome complex component Rrp4 (249 aa).

The 72-residue stretch at 73 to 144 (NDIVIGLVED…RSIDPVLSVK (72 aa)) folds into the S1 motif domain. The 58-residue stretch at 154 to 211 (GIVIDIMPVKVPRVIGKNKSMYETLTSKSGCSIFVANNGRIWATCPSRFSEEILIEAI) folds into the KH domain.

The protein belongs to the RRP4 family. As to quaternary structure, component of the archaeal exosome complex. Forms a trimer of Rrp4 and/or Csl4 subunits. The trimer associates with a hexameric ring-like arrangement composed of 3 Rrp41-Rrp42 heterodimers.

It is found in the cytoplasm. Non-catalytic component of the exosome, which is a complex involved in RNA degradation. Increases the RNA binding and the efficiency of RNA degradation. Confers strong poly(A) specificity to the exosome. This is Exosome complex component Rrp4 from Saccharolobus solfataricus (strain ATCC 35092 / DSM 1617 / JCM 11322 / P2) (Sulfolobus solfataricus).